Reading from the N-terminus, the 758-residue chain is MAVSARPARAPRGSDKVKKDKAAQTSGPRQGSRMGKLLGFEWTDVSSWERLVTLLNRPTDPAGLAVFRFLFGLMMVLDIPQERGLSSLDRRYLDGLEVCRFPLLDALQPLPLDWMYLIYTIMFLGALGMMLGLCYRISCVLFLLPYWYVFLLDKTSWNNHSYLYGLLAFQLTFVDAHHYWSVDGLLRARKRNAHVPLWNYAVLRGQIFIVYFIAGIKKLDADWVEGYSMEYLSRHWLFSPFKLVLSEEMTSLLVVHWCGLLLDLSAGFLLFFDASRPIGFVFVSYFHCMNSQLFSIGMFPYVMLASSPLFCSPEWPRKLVAHCPKKLQELLPLRTAPQPSTSCMYKRSRARGSQKPGLRHKLSTAFTLLYLLEQLFLPYSHFLTQGYNNWTNGLYGYSWDMMVHSRSHQHVKITYRDGRTGELGYLNPGVFTQSRRWKDHADMLKQYATCLSRLLPKYNVTEPQIYFDIWVSINDRFQQRIFDPRVDIVQAAWSPFQRTPWLQPLLMDLSPWRTKLQEIKSSLDNHTEVVFIADFPGLHLENFVSEDLGNTSIQLLQGEVTVELVAEQKNQTLQEGEKMQLPAGEYHKVYTVSSSPSCYMYIYVNTTEVALEQDLAYLQELKEKVENGSETGPLPPELQPLLEGEVKGGPEPTPLVQTFLRRQQRLQEIERRRNAPFHERLVRFLLRKLFIFRRSFLMTCISLRNLAFGRPSLEQLAQEVTYANLRPFEPAGEPSPVNTDSSNPNPPEPDSHPVHSEF.

The interval Met1–Met34 is disordered. At Ala2 the chain carries N-acetylalanine. The Cytoplasmic portion of the chain corresponds to Ala2–Asp60. The segment covering Arg12–Ala22 has biased composition (basic and acidic residues). Residues Pro61–Gln81 traverse the membrane as a helical segment. The Lumenal segment spans residues Glu82–Asp113. Cys99 and Cys450 are oxidised to a cystine. Residues Trp114–Cys134 traverse the membrane as a helical segment. Topologically, residues Tyr135 to Arg136 are cytoplasmic. The helical transmembrane segment at Ile137–Trp157 threads the bilayer. The Lumenal segment spans residues Asn158–Gln292. The chain crosses the membrane as a helical span at residues Leu293–Pro313. Residues Glu314–Ser363 lie on the Cytoplasmic side of the membrane. A helical transmembrane segment spans residues Thr364–Thr384. Residues Gln385–Phe758 lie on the Lumenal side of the membrane. The segment at Pro727 to Phe758 is disordered. Basic and acidic residues predominate over residues Pro749–Phe758.

Monomer. May interact with CALU. The N-terminus is blocked.

It is found in the endoplasmic reticulum membrane. The catalysed reaction is 4-carboxy-L-glutamyl-[protein] + 2,3-epoxyphylloquinone + H2O + H(+) = phylloquinol + L-glutamyl-[protein] + CO2 + O2. In terms of biological role, mediates the vitamin K-dependent carboxylation of glutamate residues to calcium-binding gamma-carboxyglutamate (Gla) residues with the concomitant conversion of the reduced hydroquinone form of vitamin K to vitamin K epoxide. Catalyzes gamma-carboxylation of various proteins, such as blood coagulation factors (F2, F7, F9 and F10), osteocalcin (BGLAP) or matrix Gla protein (MGP). This is Vitamin K-dependent gamma-carboxylase (GGCX) from Bos taurus (Bovine).